The following is a 182-amino-acid chain: Large ribosomal subunit protein uL5 (182 aa).

Belongs to the universal ribosomal protein uL5 family. As to quaternary structure, part of the 50S ribosomal subunit; part of the 5S rRNA/L5/L18/L25 subcomplex. Contacts the 5S rRNA and the P site tRNA. Forms a bridge to the 30S subunit in the 70S ribosome.

In terms of biological role, this is one of the proteins that bind and probably mediate the attachment of the 5S RNA into the large ribosomal subunit, where it forms part of the central protuberance. In the 70S ribosome it contacts protein S13 of the 30S subunit (bridge B1b), connecting the 2 subunits; this bridge is implicated in subunit movement. Contacts the P site tRNA; the 5S rRNA and some of its associated proteins might help stabilize positioning of ribosome-bound tRNAs. In Nostoc sp. (strain PCC 7120 / SAG 25.82 / UTEX 2576), this protein is Large ribosomal subunit protein uL5.